The following is a 421-amino-acid chain: NADP(+)-dependent glutamate dehydrogenase (421 aa).

Substrate contacts are provided by lysine 70 and lysine 94. The Proton donor role is filled by lysine 106. Residues threonine 190 and asparagine 221 each coordinate NADP(+). Position 354 (serine 354) interacts with substrate.

It belongs to the Glu/Leu/Phe/Val dehydrogenases family. In terms of assembly, homohexamer.

The enzyme catalyses L-glutamate + NADP(+) + H2O = 2-oxoglutarate + NH4(+) + NADPH + H(+). Is not regulated allosterically. Activity is inhibited in the presence of high ionic strength; the inhibitory effect of KCl is slightly higher than that of NaCl. Catalyzes the reversible oxidative deamination of L-glutamate to 2-oxoglutarate and ammonia, thereby playing a key role at the intersection of the carbon and nitrogen metabolic pathways. Shows a high preference for NADP(+)/NADPH as the acceptor/donor over NAD(+)/NADH. May function in vivo in the synthetic direction. Also catalyzes at very low rates the oxidative deamination of L-2-aminobutyrate, and the reductive amination of 2-oxovalerate and 2-oxobutyrate. This Pyrobaculum calidifontis (strain DSM 21063 / JCM 11548 / VA1) protein is NADP(+)-dependent glutamate dehydrogenase.